The following is a 519-amino-acid chain: 2-isopropylmalate synthase (519 aa).

Residues 5–267 form the Pyruvate carboxyltransferase domain; the sequence is VVIFDTTLRD…STNINYKEIY (263 aa). 4 residues coordinate Mn(2+): aspartate 14, histidine 202, histidine 204, and asparagine 238. The interval 392 to 519 is regulatory domain; sequence SLKFFSVQSI…LKILKDFKKK (128 aa).

It belongs to the alpha-IPM synthase/homocitrate synthase family. LeuA type 1 subfamily. In terms of assembly, homodimer. It depends on Mn(2+) as a cofactor.

The protein localises to the cytoplasm. It carries out the reaction 3-methyl-2-oxobutanoate + acetyl-CoA + H2O = (2S)-2-isopropylmalate + CoA + H(+). Its pathway is amino-acid biosynthesis; L-leucine biosynthesis; L-leucine from 3-methyl-2-oxobutanoate: step 1/4. Catalyzes the condensation of the acetyl group of acetyl-CoA with 3-methyl-2-oxobutanoate (2-ketoisovalerate) to form 3-carboxy-3-hydroxy-4-methylpentanoate (2-isopropylmalate). The protein is 2-isopropylmalate synthase of Buchnera aphidicola subsp. Acyrthosiphon pisum (strain APS) (Acyrthosiphon pisum symbiotic bacterium).